Reading from the N-terminus, the 316-residue chain is Aspartate carbamoyltransferase catalytic subunit (316 aa).

Positions 66 and 67 each coordinate carbamoyl phosphate. Lys94 serves as a coordination point for L-aspartate. Residues Arg116, His146, and Gln149 each coordinate carbamoyl phosphate. L-aspartate contacts are provided by Arg180 and Arg235. Residues Gly276 and Pro277 each contribute to the carbamoyl phosphate site.

The protein belongs to the aspartate/ornithine carbamoyltransferase superfamily. ATCase family. Heterododecamer (2C3:3R2) of six catalytic PyrB chains organized as two trimers (C3), and six regulatory PyrI chains organized as three dimers (R2).

The catalysed reaction is carbamoyl phosphate + L-aspartate = N-carbamoyl-L-aspartate + phosphate + H(+). It participates in pyrimidine metabolism; UMP biosynthesis via de novo pathway; (S)-dihydroorotate from bicarbonate: step 2/3. Its function is as follows. Catalyzes the condensation of carbamoyl phosphate and aspartate to form carbamoyl aspartate and inorganic phosphate, the committed step in the de novo pyrimidine nucleotide biosynthesis pathway. The protein is Aspartate carbamoyltransferase catalytic subunit of Stenotrophomonas maltophilia (strain K279a).